A 37-amino-acid chain; its full sequence is Large ribosomal subunit protein bL36c (37 aa).

It belongs to the bacterial ribosomal protein bL36 family.

It is found in the plastid. It localises to the chloroplast. In Ostreococcus tauri, this protein is Large ribosomal subunit protein bL36c.